A 645-amino-acid chain; its full sequence is Aminopeptidase P1 (645 aa).

Position 2 is an N-acetylserine (serine 2). A peptide-binding residues include arginine 69 and histidine 420. The Mn(2+) site is built by aspartate 440, aspartate 451, and histidine 514. The a peptide site is built by histidine 514, histidine 523, and glutamate 549. Glutamate 549 and glutamate 563 together coordinate Mn(2+).

It belongs to the peptidase M24B family. As to quaternary structure, homodimer. Interacts with N-1-naphthylphthalamic acid (NPA). The cofactor is Mn(2+). Requires Zn(2+) as cofactor. Glycosylated. Also present in a non-glycosylated form. In terms of tissue distribution, ubiquitous with preferential expression in 5 days-old seedlings, roots, flowers, inflorescences and rosette leaves (at protein levels).

The protein resides in the cytoplasm. It localises to the cell membrane. The protein localises to the microsome membrane. The enzyme catalyses Release of any N-terminal amino acid, including proline, that is linked to proline, even from a dipeptide or tripeptide.. Inhibited by EGTA and apstatin, and, to some extent, by the flavonoid kaempferol. Its function is as follows. Catalyzes the removal of a penultimate prolyl residue from the N-termini of peptides, such as Arg-Pro-Pro. Aminopeptidase that binds to the auxin transport inhibitor N-1-naphthylphthalamic acid (NPA). May play a negative role in the regulation of PIN auxin transport proteins. In Arabidopsis thaliana (Mouse-ear cress), this protein is Aminopeptidase P1.